The following is a 668-amino-acid chain: Fructose-1,6-bisphosphatase class 3 (668 aa).

Belongs to the FBPase class 3 family. Mn(2+) serves as cofactor.

It catalyses the reaction beta-D-fructose 1,6-bisphosphate + H2O = beta-D-fructose 6-phosphate + phosphate. The protein operates within carbohydrate biosynthesis; gluconeogenesis. The sequence is that of Fructose-1,6-bisphosphatase class 3 from Clostridium botulinum (strain Langeland / NCTC 10281 / Type F).